A 411-amino-acid polypeptide reads, in one-letter code: 2,3-bisphosphoglycerate-independent phosphoglycerate mutase (411 aa).

The protein belongs to the BPG-independent phosphoglycerate mutase family. A-PGAM subfamily.

The catalysed reaction is (2R)-2-phosphoglycerate = (2R)-3-phosphoglycerate. It participates in carbohydrate degradation; glycolysis; pyruvate from D-glyceraldehyde 3-phosphate: step 3/5. Functionally, catalyzes the interconversion of 2-phosphoglycerate and 3-phosphoglycerate. In Methanosphaerula palustris (strain ATCC BAA-1556 / DSM 19958 / E1-9c), this protein is 2,3-bisphosphoglycerate-independent phosphoglycerate mutase.